The sequence spans 339 residues: Uroporphyrinogen decarboxylase (339 aa).

Residues 21-25 (RQAGR), Asp-71, Tyr-147, Ser-202, and His-315 contribute to the substrate site.

The protein belongs to the uroporphyrinogen decarboxylase family. Homodimer.

It localises to the cytoplasm. The catalysed reaction is uroporphyrinogen III + 4 H(+) = coproporphyrinogen III + 4 CO2. It functions in the pathway porphyrin-containing compound metabolism; protoporphyrin-IX biosynthesis; coproporphyrinogen-III from 5-aminolevulinate: step 4/4. Its function is as follows. Catalyzes the decarboxylation of four acetate groups of uroporphyrinogen-III to yield coproporphyrinogen-III. In Helicobacter pylori (strain P12), this protein is Uroporphyrinogen decarboxylase.